A 1219-amino-acid chain; its full sequence is Cullin-associated NEDD8-dissociated protein 1 (1219 aa).

Position 2 is an N-acetylalanine (Ala-2). HEAT repeat units lie at residues 44–81, 83–119, 209–244, 248–288, 327–363, 367–404, 423–460, 464–503, 599–636, 639–676, 808–848, 850–883, 927–964, 966–998, 1002–1039, 1043–1079, 1101–1137, and 1141–1180; these read DLEV…KVGE, RIVE…QIAP, KATV…AVGY, THLG…RCPR, EEDD…SRSE, KVYQ…QTGN, QEVS…VLPD, DHIG…SHAP, AELP…LHIN, CVLD…AYGD, KNCS…RKDL, AHAG…IAVG, SSVE…IEPE, LVPA…ERPE, EIIF…YKPN, GLLP…DDGL, NPSS…KCPS, and AVLD…ALRA. The disordered stretch occupies residues 311–340; the sequence is FTDNMEEDTDNETLEDEEDDESANEYTDDE. A compositionally biased stretch (acidic residues) spans 314–340; sequence NMEEDTDNETLEDEEDDESANEYTDDE.

It belongs to the CAND family. In terms of assembly, interacts with CUL1 and CUL4. Binds unneddylated CUL1, but cannot bind CUL1 once it has been neddylated. In terms of tissue distribution, highly expressed in roots. Expressed in stems, flowers and siliques.

Key assembly factor of SCF (SKP1-CUL1-F-box protein) E3 ubiquitin ligase complexes that promotes the exchange of the substrate-recognition F-box subunit in SCF complexes, thereby playing a key role in the cellular repertoire of SCF complexes. Acts as a F-box protein exchange factor. Required for SCF(TIR1) function. Modulates SCF(TIR1) function through its interactions with the CUL1 subunit. Represses photomorphogenesis by promoting HY5 degradation in darkness. This chain is Cullin-associated NEDD8-dissociated protein 1 (CAND1), found in Arabidopsis thaliana (Mouse-ear cress).